A 339-amino-acid chain; its full sequence is MNSYWLNIYKPRGISSAKLVSMVKKILGKEVKVGHAGTLDVEAEGILPLAVGEATKLIQLLIDAKKTYIFTVKFGTKTDSGDYAGTVIATKDYIPSQEEAYNVCSKFIGNVTQIPPAFSALKVNGVRAYKLAREGKEVELKPRNITIYNLKCLNFDEKNATASYYTECSKGTYIRTLAEDLALSLQSLGFVIELRRTQVGIFKEENAIRIKSPDEITKNFLEEKSIKIEAILDDILVLDATDSQAQQIKYGQKCLFNYEEDFRRLSKFAYREEFEENTERSTAAYTLVREDANTGLTYKLPLEVELSVSLLWVRYKGNLLAIGSLNKSCFNSLRVFNLL.

Asp-40 serves as the catalytic Nucleophile. One can recognise an RPE1 insert domain in the interval Phe-262–Ser-307.

It belongs to the pseudouridine synthase TruB family. Type 1 subfamily.

The catalysed reaction is uridine(55) in tRNA = pseudouridine(55) in tRNA. Its function is as follows. Responsible for synthesis of pseudouridine from uracil-55 in the psi GC loop of transfer RNAs. The sequence is that of tRNA pseudouridine synthase B from Rickettsia felis (strain ATCC VR-1525 / URRWXCal2) (Rickettsia azadi).